We begin with the raw amino-acid sequence, 281 residues long: 2-dehydro-3-deoxyphosphooctonate aldolase 1 (281 aa).

It belongs to the KdsA family.

It is found in the cytoplasm. The catalysed reaction is D-arabinose 5-phosphate + phosphoenolpyruvate + H2O = 3-deoxy-alpha-D-manno-2-octulosonate-8-phosphate + phosphate. It functions in the pathway carbohydrate biosynthesis; 3-deoxy-D-manno-octulosonate biosynthesis; 3-deoxy-D-manno-octulosonate from D-ribulose 5-phosphate: step 2/3. It participates in bacterial outer membrane biogenesis; lipopolysaccharide biosynthesis. The polypeptide is 2-dehydro-3-deoxyphosphooctonate aldolase 1 (kdsA1) (Pseudomonas putida (strain ATCC 47054 / DSM 6125 / CFBP 8728 / NCIMB 11950 / KT2440)).